We begin with the raw amino-acid sequence, 211 residues long: Ribosomal RNA small subunit methyltransferase G (211 aa).

Residues G74, L79, 125–126 (AE), and R140 each bind S-adenosyl-L-methionine.

This sequence belongs to the methyltransferase superfamily. RNA methyltransferase RsmG family.

The protein resides in the cytoplasm. In terms of biological role, specifically methylates the N7 position of guanine in position 518 of 16S rRNA. This Clavibacter michiganensis subsp. michiganensis (strain NCPPB 382) protein is Ribosomal RNA small subunit methyltransferase G.